The chain runs to 203 residues: Peptidyl-tRNA hydrolase (203 aa).

Tyrosine 26 is a tRNA binding site. Histidine 31 (proton acceptor) is an active-site residue. 3 residues coordinate tRNA: tyrosine 82, asparagine 84, and asparagine 130.

It belongs to the PTH family. As to quaternary structure, monomer.

It is found in the cytoplasm. It carries out the reaction an N-acyl-L-alpha-aminoacyl-tRNA + H2O = an N-acyl-L-amino acid + a tRNA + H(+). Its function is as follows. Hydrolyzes ribosome-free peptidyl-tRNAs (with 1 or more amino acids incorporated), which drop off the ribosome during protein synthesis, or as a result of ribosome stalling. In terms of biological role, catalyzes the release of premature peptidyl moieties from peptidyl-tRNA molecules trapped in stalled 50S ribosomal subunits, and thus maintains levels of free tRNAs and 50S ribosomes. In Streptomyces avermitilis (strain ATCC 31267 / DSM 46492 / JCM 5070 / NBRC 14893 / NCIMB 12804 / NRRL 8165 / MA-4680), this protein is Peptidyl-tRNA hydrolase.